Reading from the N-terminus, the 300-residue chain is uncharacterized protein (300 aa).

Over residues 1–19 (MATKRAHPEDETHESKRAA) the composition is skewed to basic and acidic residues. The interval 1–20 (MATKRAHPEDETHESKRAAQ) is disordered.

This is an uncharacterized protein from Orgyia pseudotsugata multicapsid polyhedrosis virus (OpMNPV).